A 1583-amino-acid polypeptide reads, in one-letter code: Dynamin-binding protein (1583 aa).

N-acetylmethionine is present on Met1. 4 consecutive SH3 domains span residues 2 to 61 (EAGS…IVTI), 66 to 126 (EGER…ELCL), 145 to 204 (YSMG…LLGP), and 243 to 302 (QPGT…LFSK). Disordered regions lie at residues 217 to 244 (HNDC…EEQP), 306 to 329 (EETM…DCRE), and 366 to 464 (ECEV…RGMY). Positions 224 to 243 (GEEETPTGEEERGPEEDEEQ) are enriched in acidic residues. Over residues 366 to 379 (ECEVHKSSHQDEGT) the composition is skewed to basic and acidic residues. Polar residues predominate over residues 406–442 (ETINGVSSQSQVPFRPRWQQNQYYSTTGRGHLSTEQY). Ser495 is subject to Phosphoserine. 2 disordered regions span residues 594 to 656 (RGSS…PSAQ) and 671 to 693 (LFTH…QTLD). Over residues 637 to 653 (PEPPLAMRPSRPAPLPP) the composition is skewed to pro residues. The segment covering 675 to 685 (ESCESPEKEGP) has biased composition (basic and acidic residues). Positions 742–762 (LEFYESNIESLNMELQQLREM) form a coiled coil. One can recognise a DH domain in the interval 791-974 (KRAKVIEELL…KEINVNINEY (184 aa)). Residues 1015–1224 (LKHLTGFAPQ…LKVAGREGNL (210 aa)) enclose the BAR domain. The 64-residue stretch at 1292–1355 (PPEKLFQAER…YSSFLKPYNT (64 aa)) folds into the SH3 5 domain. Residues 1357–1496 (RSHSDVSVGS…GRNGQGKDLT (140 aa)) form a disordered region. The span at 1361–1387 (DVSVGSHSSTESEQSSSSPRFPRQNSS) shows a compositional bias: low complexity. Residues 1388-1414 (GTLTFNPGSMAVSFTSGSCQKQPQDAT) are compositionally biased toward polar residues. Positions 1433-1456 (SESSPSRCPSDPDSSPQPRSWDSP) are enriched in low complexity. Residues 1519 to 1582 (EGNQVYFAVY…PSNYIRKAEY (64 aa)) form the SH3 6 domain.

Binds DNM1 via its N-terminal SH3 domains. The C-terminal SH3 domain binds a complex containing actin, tubulin, Hsp70 and actin-regulatory proteins, such as ENAH, EVL, WIRE, CR16, WAVE1 and NAP1L1. Interacts with FASLG. Interacts (via SH3 domain 6) with WASL. Interacts (via SH3 domain 6) interacts with ENAH. Interacts (via C-terminal domain) with TJP1; required for the apical cell-cell junction localization of DNMBP.

It localises to the cytoplasm. The protein localises to the golgi apparatus. The protein resides in the golgi stack. It is found in the cytoskeleton. Its subcellular location is the synapse. It localises to the cell junction. Functionally, plays a critical role as a guanine nucleotide exchange factor (GEF) for CDC42 in several intracellular processes associated with the actin and microtubule cytoskeleton. Regulates the structure of apical junctions in epithelial cells. Participates in the normal lumenogenesis of epithelial cell cysts by regulating spindle orientation. Plays a key role in ciliogenesis and cyst formation. May play a role in membrane trafficking between the cell surface and the Golgi. The protein is Dynamin-binding protein of Canis lupus familiaris (Dog).